We begin with the raw amino-acid sequence, 102 residues long: NADH-quinone oxidoreductase subunit K 2 (102 aa).

3 consecutive transmembrane segments (helical) span residues 5–25, 30–50, and 65–85; these read FEHV…CVLV, LIML…AFVG, and LIIM…VVYL.

It belongs to the complex I subunit 4L family. In terms of assembly, NDH-1 is composed of 14 different subunits. Subunits NuoA, H, J, K, L, M, N constitute the membrane sector of the complex.

It is found in the cell inner membrane. It catalyses the reaction a quinone + NADH + 5 H(+)(in) = a quinol + NAD(+) + 4 H(+)(out). NDH-1 shuttles electrons from NADH, via FMN and iron-sulfur (Fe-S) centers, to quinones in the respiratory chain. The immediate electron acceptor for the enzyme in this species is believed to be ubiquinone. Couples the redox reaction to proton translocation (for every two electrons transferred, four hydrogen ions are translocated across the cytoplasmic membrane), and thus conserves the redox energy in a proton gradient. In Geobacter sulfurreducens (strain ATCC 51573 / DSM 12127 / PCA), this protein is NADH-quinone oxidoreductase subunit K 2.